We begin with the raw amino-acid sequence, 321 residues long: tRNA pseudouridine synthase B (321 aa).

Catalysis depends on Asp-47, which acts as the Nucleophile.

Belongs to the pseudouridine synthase TruB family. Type 1 subfamily.

The enzyme catalyses uridine(55) in tRNA = pseudouridine(55) in tRNA. In terms of biological role, responsible for synthesis of pseudouridine from uracil-55 in the psi GC loop of transfer RNAs. This Shewanella baltica (strain OS185) protein is tRNA pseudouridine synthase B.